The primary structure comprises 423 residues: Enolase (423 aa).

(2R)-2-phosphoglycerate is bound at residue Gln162. Glu204 functions as the Proton donor in the catalytic mechanism. 3 residues coordinate Mg(2+): Asp241, Glu284, and Asp311. 4 residues coordinate (2R)-2-phosphoglycerate: Lys336, Arg365, Ser366, and Lys387. The active-site Proton acceptor is Lys336.

The protein belongs to the enolase family. It depends on Mg(2+) as a cofactor.

The protein resides in the cytoplasm. The protein localises to the secreted. Its subcellular location is the cell surface. It catalyses the reaction (2R)-2-phosphoglycerate = phosphoenolpyruvate + H2O. It participates in carbohydrate degradation; glycolysis; pyruvate from D-glyceraldehyde 3-phosphate: step 4/5. In terms of biological role, catalyzes the reversible conversion of 2-phosphoglycerate (2-PG) into phosphoenolpyruvate (PEP). It is essential for the degradation of carbohydrates via glycolysis. The polypeptide is Enolase (Bartonella bacilliformis (strain ATCC 35685 / KC583 / Herrer 020/F12,63)).